The sequence spans 133 residues: DCPSDWSSFKQYCYQIIKQLKTWEDAERFCLDQMKGAHLVSIESYREAVFVAELLSENVKTTKYHVWIGLSVQNKGQQCSSEWSDGSTVSYENLVKPNPKKCFVLKKESEFRTWSNVYCEQKHIFMCKFLGSR.

3 disulfide bridges follow: Cys-2-Cys-13, Cys-30-Cys-127, and Cys-102-Cys-119. Residues Phe-9–Lys-128 enclose the C-type lectin domain.

Belongs to the snaclec family. Homodimer (non-covalently linked) of heterodimer of alpha and beta subunits (disulfide-linked). In terms of tissue distribution, expressed by the venom gland.

It is found in the secreted. Snaclec that induces platelet aggregation without any cofactor in a dose-dependent manner. Its platelet aggregation effect is blocked by echicetin, suggesting it is a GPIb-binding protein which binds to the same or a closely related GPIb site on platelets as echicetin. This Trimeresurus purpureomaculatus (Mangrove pit viper) protein is Snaclec purpureotin subunit alpha.